Here is a 721-residue protein sequence, read N- to C-terminus: Long-chain-fatty-acid--CoA ligase ACSBG1 (721 aa).

The segment at 1 to 64 is disordered; the sequence is MPRSSEAGYC…SHGLELSAPE (64 aa). Residues 26 to 43 show a composition bias toward polar residues; the sequence is QQGASMGTSPDNSQTSSL. A phosphoserine mark is found at serine 34, serine 50, serine 53, and serine 70. Residues 279–287, 469–474, aspartate 547, and arginine 562 contribute to the ATP site; these read TSGTTGNPK and AGYGLS. A Phosphotyrosine modification is found at tyrosine 655. Residue lysine 698 participates in ATP binding.

It belongs to the ATP-dependent AMP-binding enzyme family. Bubblegum subfamily. In terms of tissue distribution, present in testis, at a lower level in brain, and at a very low level in ovary. Not detected in other tissues. tested. Present in Leydig cells of the adult testis and to a lesser degree in the seminiferous tubules in spermatogonia and Sertoli cells (at protein level).

The protein resides in the cytoplasm. It is found in the cytoplasmic vesicle. The protein localises to the microsome. It localises to the endoplasmic reticulum. Its subcellular location is the cell membrane. It catalyses the reaction a long-chain fatty acid + ATP + CoA = a long-chain fatty acyl-CoA + AMP + diphosphate. The catalysed reaction is (E)-hexadec-2-enoate + ATP + CoA = (2E)-hexadecenoyl-CoA + AMP + diphosphate. The enzyme catalyses hexadecanoate + ATP + CoA = hexadecanoyl-CoA + AMP + diphosphate. Catalyzes the conversion of fatty acids such as long-chain and very long-chain fatty acids to their active form acyl-CoAs for both synthesis of cellular lipids, and degradation via beta-oxidation. Can activate diverse saturated, monosaturated and polyunsaturated fatty acids. This Rattus norvegicus (Rat) protein is Long-chain-fatty-acid--CoA ligase ACSBG1.